The chain runs to 72 residues: Translation initiation factor IF-1 (72 aa).

The S1-like domain maps to 1-72 (MAKEDCIEMQ…SKARIIFRAR (72 aa)).

Belongs to the IF-1 family. In terms of assembly, component of the 30S ribosomal translation pre-initiation complex which assembles on the 30S ribosome in the order IF-2 and IF-3, IF-1 and N-formylmethionyl-tRNA(fMet); mRNA recruitment can occur at any time during PIC assembly.

It localises to the cytoplasm. Its function is as follows. One of the essential components for the initiation of protein synthesis. Stabilizes the binding of IF-2 and IF-3 on the 30S subunit to which N-formylmethionyl-tRNA(fMet) subsequently binds. Helps modulate mRNA selection, yielding the 30S pre-initiation complex (PIC). Upon addition of the 50S ribosomal subunit IF-1, IF-2 and IF-3 are released leaving the mature 70S translation initiation complex. The chain is Translation initiation factor IF-1 from Haemophilus ducreyi (strain 35000HP / ATCC 700724).